The chain runs to 138 residues: Putative esterase HI_1161 (138 aa).

The protein belongs to the thioesterase PaaI family.

The chain is Putative esterase HI_1161 from Haemophilus influenzae (strain ATCC 51907 / DSM 11121 / KW20 / Rd).